A 679-amino-acid polypeptide reads, in one-letter code: MPRVKAVKKQAEALASEPTDPTPNANGNGVDENADSAAEELKVPAKGKPRARKATKTAVSAENSEEVEPQKAPTAAARGKKKQPKDTDENGQMEVVAKPKGRAKKATAEAEPEPKVDLPAGKATKPRAKKEPTPAPDEVTSSPPKGRAKAEKPTNAQAKGRKRKELPAEANGGAEEAAEPPKQRARKEAVPTLKEQAEPGTISKEKVQKAETAAKRARGTKRLADSEIAAALDEPEVDEVPPKAASKRAKKGKMVEPSPETVGDFQSVQEEVESPPKTAAAPKKRAKKTTNGETAVELEPKTKAKPTKQRAKKEGKEPAPGKKQKKSADKENGVVEEEAKPSTETKPAKGRKKAPVKAEDVEDIEEAAEESKPARGRKKAAAKAEEPDVDEESGSKTTKKAKKAETKTTVTLDKDAFALPADKEFNLKICSWNVAGLRAWLKKDGLQLIDLEEPDIFCLQETKCANDQLPEEVTRLPGYHPYWLCMPGGYAGVAIYSKIMPIHVEYGIGNEEFDDVGRMITAEYEKFYLINVYVPNSGRKLVNLEPRMRWEKLFQAYVKKLDALKPVVICGDMNVSHMPIDLENPKNNTKNAGFTQEERDKMTELLGLGFVDTFRHLYPDRKGAYTFWTYMANARARNVGWRLDYCLVSERFVPKVVEHEIRSQCLGSDHCPITIFFNI.

The disordered stretch occupies residues 1 to 407 (MPRVKAVKKQ…TKKAKKAETK (407 aa)). Positions 45 to 55 (AKGKPRARKAT) are enriched in basic residues. Basic and acidic residues predominate over residues 106–116 (ATAEAEPEPKV). A phosphothreonine mark is found at Thr133 and Thr140. Ser142 bears the Phosphoserine mark. Basic and acidic residues-rich tracts occupy residues 179–189 (EPPKQRARKEA) and 203–214 (SKEKVQKAETAA). Residue Ser258 is modified to Phosphoserine. Basic and acidic residues predominate over residues 312–347 (KKEGKEPAPGKKQKKSADKENGVVEEEAKPSTETKP). The interval 428–679 (KICSWNVAGL…HCPITIFFNI (252 aa)) is AP endonuclease. Glu461 provides a ligand contact to Mg(2+). Tyr533 is a catalytic residue. 3 residues coordinate Mg(2+): Asp572, Asn574, and Asp669. The Proton donor/acceptor role is filled by Asp572.

The protein belongs to the DNA repair enzymes AP/ExoA family. As to quaternary structure, interacts with the zeta DNA polymerase complex; interacts (via the N-terminus) with the accessory subunit PolZ2/Rev7 and also interacts with the catalytic component PolZ1, however the interaction with PolZ1 is likely via PolZ2. It depends on Mg(2+) as a cofactor. Mn(2+) serves as cofactor.

It localises to the nucleus. The catalysed reaction is Exonucleolytic cleavage in the 3'- to 5'-direction to yield nucleoside 5'-phosphates.. Plays a role in the cellular response to oxidative stress by promoting DNA repair mechanisms such as base excision repair and possibly homologous recombination repair. Functions as an apurinic/apyrimidinic (AP) endodeoxyribonuclease in the DNA base excision repair (BER) pathway of DNA lesions induced by oxidative and alkylating agents. Likely to initiate repair of AP sites in DNA by catalyzing hydrolytic incision of the phosphodiester backbone immediately adjacent to the damage, generating a single-strand break with 5'-deoxyribose phosphate and 3'-hydroxyl ends. Has a 3'-5' exoribonuclease activity on mismatched deoxyribonucleotides at the 3' termini of nicked or gapped DNA molecules during short-patch BER. Has apurinic endonuclease and double-stranded DNA 3'-exonuclease activities and carries out single-stranded DNA renaturation in a Mg(2+)-dependent manner. Activity is more efficient in purine-rich regions of dsDNA than in pyrimidine-rich regions. The sequence is that of Recombination repair protein 1 from Drosophila melanogaster (Fruit fly).